A 190-amino-acid chain; its full sequence is Iron-sulfur protein (190 aa).

The region spanning 8–36 (VIIYANPDHCLSCHSCELACAVAHSGGHD) is the 4Fe-4S ferredoxin-type 1 domain. 16 residues coordinate [4Fe-4S] cluster: C17, C20, C23, C27, C65, C68, C73, C77, C96, C99, C102, C106, C133, C136, C150, and C154. 2 consecutive 4Fe-4S ferredoxin-type domains span residues 87–116 (GQVQIVEQHCIGCKLCVMVCPFGAITVRSE) and 133–164 (CDLCVDWRASTGKTAPACVEACPTKAIRMVDL).

The carbon monoxide dehydrogenase (CODH) oxidizes carbon monoxide coupled, via CooF, to the reduction of a hydrogen cation by a hydrogenase (probably CooH). CooF is required in stoichiometric amounts in vitro for anchoring CODH to the membrane as well as for conveying the electrons to the hydrogenase. The chain is Iron-sulfur protein (cooF) from Rhodospirillum rubrum.